The sequence spans 200 residues: Potassium-transporting ATPase KdpC subunit (200 aa).

Residues 7–27 traverse the membrane as a helical segment; sequence PALVMIVLFTILTGLIYPLAM.

Belongs to the KdpC family. As to quaternary structure, the system is composed of three essential subunits: KdpA, KdpB and KdpC.

The protein resides in the cell inner membrane. Functionally, part of the high-affinity ATP-driven potassium transport (or Kdp) system, which catalyzes the hydrolysis of ATP coupled with the electrogenic transport of potassium into the cytoplasm. This subunit acts as a catalytic chaperone that increases the ATP-binding affinity of the ATP-hydrolyzing subunit KdpB by the formation of a transient KdpB/KdpC/ATP ternary complex. The sequence is that of Potassium-transporting ATPase KdpC subunit from Methylocella silvestris (strain DSM 15510 / CIP 108128 / LMG 27833 / NCIMB 13906 / BL2).